A 278-amino-acid polypeptide reads, in one-letter code: Elongation factor Ts (278 aa).

The segment at 82–85 (TDFV) is involved in Mg(2+) ion dislocation from EF-Tu.

It belongs to the EF-Ts family.

Its subcellular location is the cytoplasm. Functionally, associates with the EF-Tu.GDP complex and induces the exchange of GDP to GTP. It remains bound to the aminoacyl-tRNA.EF-Tu.GTP complex up to the GTP hydrolysis stage on the ribosome. This is Elongation factor Ts (tsf) from Streptomyces coelicolor (strain ATCC BAA-471 / A3(2) / M145).